The chain runs to 208 residues: Probable nicotinate-nucleotide adenylyltransferase (208 aa).

The protein belongs to the NadD family.

The enzyme catalyses nicotinate beta-D-ribonucleotide + ATP + H(+) = deamido-NAD(+) + diphosphate. The protein operates within cofactor biosynthesis; NAD(+) biosynthesis; deamido-NAD(+) from nicotinate D-ribonucleotide: step 1/1. In terms of biological role, catalyzes the reversible adenylation of nicotinate mononucleotide (NaMN) to nicotinic acid adenine dinucleotide (NaAD). The chain is Probable nicotinate-nucleotide adenylyltransferase from Trichormus variabilis (strain ATCC 29413 / PCC 7937) (Anabaena variabilis).